The following is a 75-amino-acid chain: Small ribosomal subunit protein bS21 (75 aa).

It belongs to the bacterial ribosomal protein bS21 family.

The sequence is that of Small ribosomal subunit protein bS21 from Brucella abortus (strain S19).